The primary structure comprises 138 residues: Flagellar basal body rod protein FlgB (138 aa).

The protein belongs to the flagella basal body rod proteins family. In terms of assembly, the basal body constitutes a major portion of the flagellar organelle and consists of a number of rings mounted on a central rod. In Gram-negative bacteria, at least four rings, L, P, S and M are present, whereas Gram-positive bacteria lack the L and P rings. The rod consists of about 26 subunits of FlgG in the distal portion, and FlgB, FlgC and FlgF build up the proximal portion of the rod with about 6 subunits each. Rod assembly occurs by export via the flagellum-specific pathway of its constituent proteins and by their incorporation into the rod structure in the probable order of FlgB, FlgC, FlgF and FlgG. Another protein, FliE, also assembles onto the stable rod structure.

Its subcellular location is the bacterial flagellum basal body. In terms of biological role, structural component of flagellum, the bacterial motility apparatus. Part of the rod structure of flagellar basal body. In Escherichia coli (strain K12), this protein is Flagellar basal body rod protein FlgB (flgB).